A 396-amino-acid chain; its full sequence is MDLAGLSALAKPYAVLASEGLTQLVWTERDRISLMGPVLNPECGLIPTCWPAVVDSIRRCPDRDLDVMRAHELTIGGRTYWSLSYSETLFELNETWECIALPFVPGRLGRWKEAPPLASMERVASEVEEYLGDRDVTNCSVRFAYIMGMDVTIPEGVESIRWDSTGRPFMVFSEDAGAETVERVCRESFDIDSCVVFPLSTAPMTGNNLFLTCILCYGPRNMTPAVRAGVEVLAKKAIMQHTNSGRSFNCFDCRMETRDTPIGPEVVFGSGSIFISPEEKAELARNGRLLSTDKVVELVGDSGRKRPAVISWQSAWRKRKARRVGFLPASVRLQTDALDGSAAAGRRFLQQYCGTYVTRQLGFNERDARLRLRRGPYVTTAPRGVVFEDETTDPLR.

This is an uncharacterized protein from Psittacid herpesvirus 1 (isolate Amazon parrot/-/97-0001/1997) (PsHV-1).